The following is a 77-amino-acid chain: Protein NS4 (77 aa).

The protein localises to the host cytoplasm. It localises to the host nucleus. Its subcellular location is the host nucleolus. May function as a nucleic acid binding protein that modulates transcription of genes participating in the IFN response. The sequence is that of Protein NS4 (Segment-9) from Antilocapra americana (Pronghorn).